The sequence spans 309 residues: UDP-N-acetylenolpyruvoylglucosamine reductase (309 aa).

The FAD-binding PCMH-type domain maps to 34–199 (RVGGPAQVLF…TSARLRGTPA (166 aa)). Arg179 is a catalytic residue. Residue Ser228 is the Proton donor of the active site. Glu298 is an active-site residue.

This sequence belongs to the MurB family. FAD is required as a cofactor.

Its subcellular location is the cytoplasm. The catalysed reaction is UDP-N-acetyl-alpha-D-muramate + NADP(+) = UDP-N-acetyl-3-O-(1-carboxyvinyl)-alpha-D-glucosamine + NADPH + H(+). The protein operates within cell wall biogenesis; peptidoglycan biosynthesis. Functionally, cell wall formation. This chain is UDP-N-acetylenolpyruvoylglucosamine reductase, found in Rhodopseudomonas palustris (strain ATCC BAA-98 / CGA009).